The sequence spans 92 residues: Small ribosomal subunit protein uS19 (92 aa).

It belongs to the universal ribosomal protein uS19 family.

Protein S19 forms a complex with S13 that binds strongly to the 16S ribosomal RNA. This is Small ribosomal subunit protein uS19 (rpsS) from Geobacillus stearothermophilus (Bacillus stearothermophilus).